We begin with the raw amino-acid sequence, 366 residues long: Chorismate synthase (366 aa).

Arg-48 and Arg-54 together coordinate NADP(+). FMN-binding positions include 125–127, 238–239, Gly-278, 293–297, and Arg-319; these read RSS, NA, and KPTSS.

This sequence belongs to the chorismate synthase family. As to quaternary structure, homotetramer. FMNH2 is required as a cofactor.

The catalysed reaction is 5-O-(1-carboxyvinyl)-3-phosphoshikimate = chorismate + phosphate. The protein operates within metabolic intermediate biosynthesis; chorismate biosynthesis; chorismate from D-erythrose 4-phosphate and phosphoenolpyruvate: step 7/7. Its function is as follows. Catalyzes the anti-1,4-elimination of the C-3 phosphate and the C-6 proR hydrogen from 5-enolpyruvylshikimate-3-phosphate (EPSP) to yield chorismate, which is the branch point compound that serves as the starting substrate for the three terminal pathways of aromatic amino acid biosynthesis. This reaction introduces a second double bond into the aromatic ring system. This is Chorismate synthase from Methylococcus capsulatus (strain ATCC 33009 / NCIMB 11132 / Bath).